We begin with the raw amino-acid sequence, 568 residues long: AP2-like ethylene-responsive transcription factor PLT2 (568 aa).

Residues 151 to 171 (ASPAETSADNSSSTTNTSGGA) show a composition bias toward low complexity. The interval 151–173 (ASPAETSADNSSSTTNTSGGAIV) is disordered. 2 DNA-binding regions (AP2/ERF) span residues 190-256 (IYRG…TNFP) and 292-350 (MYRG…TNFE). The disordered stretch occupies residues 548–568 (WNSGESAQGSNPGGVFTMWNE).

This sequence belongs to the AP2/ERF transcription factor family. AP2 subfamily. In terms of processing, stabilized in root meristems by reactive oxygen species (ROS) mediated oxidative post-translational modification triggered by RGF1 hormone peptide in a RITF1-dependent manner. Expressed in roots, seedlings, flowers, and siliques. Also detected at low levels in leaves. In roots, specifically detected in the distal root meristem, including the QC. This tissue specificity is regulated by auxin gradient and depends on PIN proteins.

Its subcellular location is the nucleus. Its function is as follows. Probably acts as a transcriptional activator. Binds to the GCC-box pathogenesis-related promoter element. May be involved in the regulation of gene expression by stress factors and by components of stress signal transduction pathways. Master regulator of basal/root fate. Essential for root quiescent center (QC) and columella specification, stem cell activity, as well as for establishment of the stem cell niche during embryogenesis. Modulates the root polar auxin transport by regulating the distribution of PIN genes. Essential role in respecifying pattern and polarity in damaged roots. Direct target of the transcriptional corepressor TPL. Expression levels and patterns regulated post-transcriptionally by root meristem growth factors (RGFs). The sequence is that of AP2-like ethylene-responsive transcription factor PLT2 from Arabidopsis thaliana (Mouse-ear cress).